A 912-amino-acid chain; its full sequence is Probable transmembrane GTPase FZO-like, chloroplastic (912 aa).

Residues 1-54 constitute a chloroplast transit peptide; the sequence is MRTLISHRQCVTSPFLISAASPPFPGRCFKLSSFTPPRHRRFSSLSIRNISHES. The disordered stretch occupies residues 51–71; that stretch reads SHESADQTSSSRPRTLYPGGY. At 55–773 the chain is on the stromal side; that stretch reads ADQTSSSRPR…SKRLEQDIRE (719 aa). Residues 359-364 and Ser-521 contribute to the GTP site; that span reads NSGKST. Residues 774 to 794 traverse the membrane as a helical segment; sequence VFFVTVGGLGAAGLSASLLTS. Over 795–801 the chain is Chloroplast intermembrane; sequence VLPTTLE. A helical transmembrane segment spans residues 802–822; the sequence is DLLALGLCSAGGYVAIANFPY. Residues 823-912 are Stromal-facing; that stretch reads RRQAIIGKVN…LHVSRDEMRL (90 aa). Residues 877-904 are a coiled coil; that stretch reads DRLLGIQKELSDIRSKLQLLQVDIDNLH.

The protein belongs to the TRAFAC class dynamin-like GTPase superfamily. Dynamin/Fzo/YdjA family. Mitofusin subfamily.

It is found in the plastid. The protein resides in the chloroplast inner membrane. The protein localises to the chloroplast thylakoid membrane. In terms of biological role, probable membrane-remodeling GTPase that plays a unique role in the in the determination of thylakoid and chloroplast morphology and regulates organization of the thylakoid network. Not involved in the determination of mitochondrial morphology or ultrastructure. This chain is Probable transmembrane GTPase FZO-like, chloroplastic, found in Arabidopsis thaliana (Mouse-ear cress).